Here is a 508-residue protein sequence, read N- to C-terminus: Histidine ammonia-lyase (508 aa).

The 5-imidazolinone (Ala-Gly) cross-link spans 143 to 145 (ASG). The residue at position 144 (serine 144) is a 2,3-didehydroalanine (Ser).

This sequence belongs to the PAL/histidase family. In terms of processing, contains an active site 4-methylidene-imidazol-5-one (MIO), which is formed autocatalytically by cyclization and dehydration of residues Ala-Ser-Gly.

The protein localises to the cytoplasm. The enzyme catalyses L-histidine = trans-urocanate + NH4(+). It participates in amino-acid degradation; L-histidine degradation into L-glutamate; N-formimidoyl-L-glutamate from L-histidine: step 1/3. The polypeptide is Histidine ammonia-lyase (Anaeromyxobacter sp. (strain K)).